The following is a 163-amino-acid chain: Aspartate carbamoyltransferase regulatory chain (163 aa).

Cysteine 113, cysteine 118, cysteine 143, and cysteine 146 together coordinate Zn(2+).

It belongs to the PyrI family. In terms of assembly, contains catalytic and regulatory chains. Requires Zn(2+) as cofactor.

Functionally, involved in allosteric regulation of aspartate carbamoyltransferase. The protein is Aspartate carbamoyltransferase regulatory chain of Caldivirga maquilingensis (strain ATCC 700844 / DSM 13496 / JCM 10307 / IC-167).